A 322-amino-acid chain; its full sequence is o-succinylbenzoate synthase (322 aa).

Lysine 136 (proton donor) is an active-site residue. Mg(2+) contacts are provided by aspartate 165, glutamate 194, and aspartate 219. The active-site Proton acceptor is the lysine 243.

This sequence belongs to the mandelate racemase/muconate lactonizing enzyme family. MenC type 1 subfamily. In terms of assembly, monomer. A divalent metal cation serves as cofactor.

It catalyses the reaction (1R,6R)-6-hydroxy-2-succinyl-cyclohexa-2,4-diene-1-carboxylate = 2-succinylbenzoate + H2O. It participates in quinol/quinone metabolism; 1,4-dihydroxy-2-naphthoate biosynthesis; 1,4-dihydroxy-2-naphthoate from chorismate: step 4/7. The protein operates within cofactor biosynthesis; phylloquinone biosynthesis. Functionally, converts 2-succinyl-6-hydroxy-2,4-cyclohexadiene-1-carboxylate (SHCHC) to 2-succinylbenzoate (OSB). Does not show N-succinylamino acid racemase (NSAR) activity with N-succinyl-L-phenylglycine as substrate. The sequence is that of o-succinylbenzoate synthase from Thermosynechococcus vestitus (strain NIES-2133 / IAM M-273 / BP-1).